The following is a 253-amino-acid chain: Hydroxyacylglutathione hydrolase (253 aa).

Positions 54, 56, 58, 59, 112, 131, and 169 each coordinate Zn(2+).

This sequence belongs to the metallo-beta-lactamase superfamily. Glyoxalase II family. As to quaternary structure, monomer. Zn(2+) is required as a cofactor.

It carries out the reaction an S-(2-hydroxyacyl)glutathione + H2O = a 2-hydroxy carboxylate + glutathione + H(+). It functions in the pathway secondary metabolite metabolism; methylglyoxal degradation; (R)-lactate from methylglyoxal: step 2/2. In terms of biological role, thiolesterase that catalyzes the hydrolysis of S-D-lactoyl-glutathione to form glutathione and D-lactic acid. The chain is Hydroxyacylglutathione hydrolase from Bartonella tribocorum (strain CIP 105476 / IBS 506).